A 651-amino-acid polypeptide reads, in one-letter code: Methionine--tRNA ligase (651 aa).

Residues 10–20 (AYTNGPLHLGH) carry the 'HIGH' region motif. Cysteine 142, cysteine 145, cysteine 154, and cysteine 157 together coordinate Zn(2+). The short motif at 320 to 324 (KMSTS) is the 'KMSKS' region element. ATP is bound at residue threonine 323. One can recognise a tRNA-binding domain in the interval 550–651 (YLEKIDLRVG…KDIKAGSKVR (102 aa)).

This sequence belongs to the class-I aminoacyl-tRNA synthetase family. MetG type 1 subfamily. Homodimer. Requires Zn(2+) as cofactor.

It localises to the cytoplasm. It carries out the reaction tRNA(Met) + L-methionine + ATP = L-methionyl-tRNA(Met) + AMP + diphosphate. Is required not only for elongation of protein synthesis but also for the initiation of all mRNA translation through initiator tRNA(fMet) aminoacylation. This Methanocaldococcus jannaschii (strain ATCC 43067 / DSM 2661 / JAL-1 / JCM 10045 / NBRC 100440) (Methanococcus jannaschii) protein is Methionine--tRNA ligase.